Here is a 274-residue protein sequence, read N- to C-terminus: Large ribosomal subunit protein uL2 (274 aa).

A disordered region spans residues 224-256; it reads AMNPIDHPHGGGEGRTGEGRHAVDPWGNLTKGY. Residues 229 to 246 show a composition bias toward basic and acidic residues; the sequence is DHPHGGGEGRTGEGRHAV.

This sequence belongs to the universal ribosomal protein uL2 family. As to quaternary structure, part of the 50S ribosomal subunit. Forms a bridge to the 30S subunit in the 70S ribosome.

Its function is as follows. One of the primary rRNA binding proteins. Required for association of the 30S and 50S subunits to form the 70S ribosome, for tRNA binding and peptide bond formation. It has been suggested to have peptidyltransferase activity; this is somewhat controversial. Makes several contacts with the 16S rRNA in the 70S ribosome. This chain is Large ribosomal subunit protein uL2, found in Acidovorax ebreus (strain TPSY) (Diaphorobacter sp. (strain TPSY)).